A 150-amino-acid chain; its full sequence is Large ribosomal subunit protein uL15 (150 aa).

Positions 1–55 (MADNEILQMHDLKPAPGAKKDRTRVGRGEGSKGKTSGRGAKGQTKRNHVRPGFEG) are disordered. A compositionally biased stretch (basic and acidic residues) spans 8–32 (QMHDLKPAPGAKKDRTRVGRGEGSK).

This sequence belongs to the universal ribosomal protein uL15 family. As to quaternary structure, part of the 50S ribosomal subunit.

Binds to the 23S rRNA. The sequence is that of Large ribosomal subunit protein uL15 from Bifidobacterium longum (strain NCC 2705).